The chain runs to 361 residues: DNA replication and repair protein RecF (361 aa).

30–37 lines the ATP pocket; that stretch reads GDNAQGKT.

Belongs to the RecF family.

It is found in the cytoplasm. The RecF protein is involved in DNA metabolism; it is required for DNA replication and normal SOS inducibility. RecF binds preferentially to single-stranded, linear DNA. It also seems to bind ATP. The polypeptide is DNA replication and repair protein RecF (Clostridium novyi (strain NT)).